Reading from the N-terminus, the 508-residue chain is Maturase K (508 aa).

This sequence belongs to the intron maturase 2 family. MatK subfamily.

It localises to the plastid. The protein resides in the chloroplast. Its function is as follows. Usually encoded in the trnK tRNA gene intron. Probably assists in splicing its own and other chloroplast group II introns. This chain is Maturase K, found in Marathrum schiedeanum.